Reading from the N-terminus, the 259-residue chain is Flagellar L-ring protein 1 (259 aa).

Positions 1–15 (MKRICLLALITTMSG) are cleaved as a signal peptide. C16 carries N-palmitoyl cysteine lipidation. The S-diacylglycerol cysteine moiety is linked to residue C16. The segment at 38–63 (EGDKSKDESSGIVDTLRGRNDPVAGD) is disordered.

It belongs to the FlgH family. The basal body constitutes a major portion of the flagellar organelle and consists of four rings (L,P,S, and M) mounted on a central rod.

The protein localises to the cell outer membrane. The protein resides in the bacterial flagellum basal body. Functionally, assembles around the rod to form the L-ring and probably protects the motor/basal body from shearing forces during rotation. The chain is Flagellar L-ring protein 1 (flgH1) from Vibrio parahaemolyticus serotype O3:K6 (strain RIMD 2210633).